Reading from the N-terminus, the 716-residue chain is 1,4-alpha-glucan branching enzyme GlgB (716 aa).

The active-site Nucleophile is the D399. The Proton donor role is filled by E452.

It belongs to the glycosyl hydrolase 13 family. GlgB subfamily. Monomer.

The catalysed reaction is Transfers a segment of a (1-&gt;4)-alpha-D-glucan chain to a primary hydroxy group in a similar glucan chain.. The protein operates within glycan biosynthesis; glycogen biosynthesis. Functionally, catalyzes the formation of the alpha-1,6-glucosidic linkages in glycogen by scission of a 1,4-alpha-linked oligosaccharide from growing alpha-1,4-glucan chains and the subsequent attachment of the oligosaccharide to the alpha-1,6 position. This chain is 1,4-alpha-glucan branching enzyme GlgB, found in Rhodopseudomonas palustris (strain HaA2).